The primary structure comprises 324 residues: Olfactory receptor 4K15 (324 aa).

Residues 1–25 (MNETNHSRVTEFVLLGLSSSRELQP) are Extracellular-facing. N-linked (GlcNAc...) asparagine glycans are attached at residues N2 and N5. Residues 26–49 (FLFLTFSLLYLAILLGNFLIILTV) form a helical membrane-spanning segment. The Cytoplasmic portion of the chain corresponds to 50–57 (TSDSRLHT). The chain crosses the membrane as a helical span at residues 58-79 (PMYFLLANLSFIDVCVASFATP). At 80-100 (KMIADFLVERKTISFDACLAQ) the chain is on the extracellular side. An intrachain disulfide couples C97 to C189. A helical transmembrane segment spans residues 101-120 (IFFVHLFTGSEMVLLVSMAY). Topologically, residues 121–139 (DRYVAICKPLHYMTVMSRR) are cytoplasmic. A helical transmembrane segment spans residues 140-158 (VCVVLVLISWFVGFIHTTS). Topologically, residues 159–195 (QLAFTVNLPFCGPNKVDSFFCDLPLVTKLACIDTYVV) are extracellular. The chain crosses the membrane as a helical span at residues 196 to 219 (SLLIVADSGFLSLSSFLLLVVSYT). Residues 220 to 235 (VILVTVRNRSSASMAK) lie on the Cytoplasmic side of the membrane. A helical transmembrane segment spans residues 236–258 (ARSTLTAHITVVTLFFGPCIFIY). At 259-269 (VWPFSSYSVDK) the chain is on the extracellular side. Residues 270 to 289 (VLAVFYTIFTLILNPVIYTL) form a helical membrane-spanning segment. At 290–324 (RNKEVKAAMSKLKSRYLKPSQVSVVIRNVLFLETK) the chain is on the cytoplasmic side.

This sequence belongs to the G-protein coupled receptor 1 family.

It localises to the cell membrane. Its function is as follows. Odorant receptor. This is Olfactory receptor 4K15 (OR4K15) from Homo sapiens (Human).